Reading from the N-terminus, the 279-residue chain is Ribonuclease T2 protein rnst-2 (279 aa).

The N-terminal stretch at 1–17 (MKLLLLLCISCIPLAYS) is a signal peptide. The cysteines at positions 37 and 48 are disulfide-linked. Residue H60 is part of the active site. N-linked (GlcNAc...) asparagine glycosylation is present at N68. Residues E114 and H118 contribute to the active site. C200 and C210 are joined by a disulfide.

The protein belongs to the RNase T2 family. In terms of tissue distribution, expressed in the pharynx, hypodermis, muscle cells, sheath cells, intestinal cells, the vulva and tail regions.

The protein resides in the lysosome. It catalyses the reaction a ribonucleotidyl-ribonucleotide-RNA + H2O = a 3'-end 3'-phospho-ribonucleotide-RNA + a 5'-end dephospho-ribonucleoside-RNA + H(+). Probable endoribonuclease involved in the autophagy-mediated degradation of ribosomal RNA and ribosomal proteins in lysosomes. The sequence is that of Ribonuclease T2 protein rnst-2 from Caenorhabditis elegans.